Reading from the N-terminus, the 959-residue chain is Translation initiation factor IF-2 (959 aa).

Positions 1–10 (MSDKTNDDKT) are enriched in basic and acidic residues. A disordered region spans residues 1-374 (MSDKTNDDKT…SQMQETREKI (374 aa)). The segment covering 27–37 (EQSTVRQNFSH) has biased composition (polar residues). Low complexity-rich tracts occupy residues 63 to 118 (AAAA…VTKP) and 128 to 138 (QRPGGQQAQRP). 2 stretches are compositionally biased toward basic and acidic residues: residues 154–225 (SEMD…EAAK) and 232–241 (ARSERRDDAR). Over residues 246-284 (GARPQQAGRPQGGRPQPAGRPQQGSPRPAPIIADAAPIA) the composition is skewed to low complexity. Basic and acidic residues predominate over residues 318–333 (PEVRAPKVVKGEDDRR). Positions 457 to 626 (SRPPVVTIMG…LLQAEMLDLK (170 aa)) constitute a tr-type G domain. Residues 466-473 (GHVDHGKT) form a G1 region. 466-473 (GHVDHGKT) contributes to the GTP binding site. Residues 491-495 (GITQH) form a G2 region. A G3 region spans residues 512–515 (DTPG). GTP-binding positions include 512–516 (DTPGH) and 566–569 (NKID). Residues 566–569 (NKID) form a G4 region. The segment at 602-604 (SAK) is G5.

The protein belongs to the TRAFAC class translation factor GTPase superfamily. Classic translation factor GTPase family. IF-2 subfamily.

It is found in the cytoplasm. In terms of biological role, one of the essential components for the initiation of protein synthesis. Protects formylmethionyl-tRNA from spontaneous hydrolysis and promotes its binding to the 30S ribosomal subunits. Also involved in the hydrolysis of GTP during the formation of the 70S ribosomal complex. This is Translation initiation factor IF-2 from Brucella canis (strain ATCC 23365 / NCTC 10854 / RM-666).